The sequence spans 592 residues: Calnexin (592 aa).

An N-terminal signal peptide occupies residues 1-20 (MEGKWLLCMLLVLGTAIVEA). The Lumenal portion of the chain corresponds to 21 to 481 (HDGHDDDVID…QMIEAAEERP (461 aa)). Ca(2+) contacts are provided by Ser-74 and Asp-117. The residue at position 137 (Lys-137) is an N6-acetyllysine. Cys-160 and Cys-194 are joined by a disulfide. Residues Tyr-164, Lys-166, Tyr-185, and Asp-192 each contribute to the an alpha-D-glucoside site. Positions 260–345 (GNLLNDMTPP…AEKPEDWDED (86 aa)) are disordered. Over residues 274-319 (REIEDPEDRKPEDWDERPKIPDPEAVKPDDWDEDAPAKIPDEEATK) the composition is skewed to basic and acidic residues. Residues 276-409 (IEDPEDRKPE…RKIPNPDFFE (134 aa)) are p domain (Extended arm). 5 repeat units span residues 278–290 (DPEDRKPEDWDER), 295–307 (DPEAVKPDDWDED), 314–326 (DEEATKPEGWLDD), 333–345 (DPDAEKPEDWDED), and 348–358 (GEWEAPQIANP). 4 X approximate repeats stretches follow at residues 278-345 (DPED…WDED) and 348-405 (GEWE…IPNP). The segment covering 323–345 (WLDDEPEYVPDPDAEKPEDWDED) has biased composition (acidic residues). The interaction with PPIB stretch occupies residues 326–359 (DEPEYVPDPDAEKPEDWDEDMDGEWEAPQIANPR). Cysteines 360 and 366 form a disulfide. Tandem repeats lie at residues 367-377 (GVWQRPVIDNP), 381-391 (GKWKPPMIDNP), and 395-405 (GIWKPRKIPNP). Glu-425 contributes to the an alpha-D-glucoside binding site. Asp-436 lines the Ca(2+) pocket. A helical transmembrane segment spans residues 482–502 (WLWVVYILTVALPVFLVILFC). Residues Cys-502 and Cys-503 are each lipidated (S-palmitoyl cysteine). Topologically, residues 503-592 (CSGKKQTSGM…SPRNRKPRRE (90 aa)) are cytoplasmic. The interval 503 to 592 (CSGKKQTSGM…SPRNRKPRRE (90 aa)) is sufficient to mediate interaction with SGIP1. The interval 511 to 592 (GMEYKKTDAP…SPRNRKPRRE (82 aa)) is disordered. Positions 525–547 (KEEEEEKEEEKDKGDEEEEGEEK) are enriched in acidic residues. The residue at position 554 (Ser-554) is a Phosphoserine. At Thr-562 the chain carries Phosphothreonine. Ser-564 carries the post-translational modification Phosphoserine; by MAPK3. The residue at position 583 (Ser-583) is a Phosphoserine.

Belongs to the calreticulin family. In terms of assembly, interacts with MAPK3/ERK1. Interacts with KCNH2. Associates with ribosomes. Interacts with SGIP1; involved in negative regulation of endocytosis. The palmitoylated form interacts with the ribosome-translocon complex component SSR1, promoting efficient folding of glycoproteins. Interacts with SERPINA2P/SERPINA2 and with the S and Z variants of SERPINA1. Interacts with PPIB. Interacts with ZNRF4. Interacts with SMIM22. Interacts with TMX2. Interacts with TMEM35A/NACHO. Interacts with CHRNA7. Interacts with reticulophagy regulators RETREG2 and RETREG3. Interacts with DNM1L; may form part of a larger protein complex at the ER-mitochondrial interface during mitochondrial fission. Interacts with ADAM7. (Microbial infection) Interacts with HBV large envelope protein, isoform L. As to quaternary structure, (Microbial infection) Interacts with HBV large envelope protein, isoform M; this association may be essential for isoform M proper secretion. Phosphorylated at Ser-564 by MAPK3/ERK1. Phosphorylation by MAPK3/ERK1 increases its association with ribosomes. In terms of processing, palmitoylation by DHHC6 leads to the preferential localization to the perinuclear rough ER. It mediates the association of calnexin with the ribosome-translocon complex (RTC) which is required for efficient folding of glycosylated proteins. Post-translationally, ubiquitinated, leading to proteasomal degradation. Probably ubiquitinated by ZNRF4.

It localises to the endoplasmic reticulum membrane. The protein resides in the mitochondrion membrane. It is found in the melanosome membrane. Functionally, calcium-binding protein that interacts with newly synthesized monoglucosylated glycoproteins in the endoplasmic reticulum. It may act in assisting protein assembly and/or in the retention within the ER of unassembled protein subunits. It seems to play a major role in the quality control apparatus of the ER by the retention of incorrectly folded proteins. Associated with partial T-cell antigen receptor complexes that escape the ER of immature thymocytes, it may function as a signaling complex regulating thymocyte maturation. Additionally it may play a role in receptor-mediated endocytosis at the synapse. The protein is Calnexin (CANX) of Homo sapiens (Human).